The chain runs to 347 residues: NADH-ubiquinone oxidoreductase chain 2 (347 aa).

9 helical membrane-spanning segments follow: residues 5–22 (ILAIVMSTVISGTIMVLI), 26–45 (WLTIWIGFEMNMLAIIPILM), 60–80 (FLTQATASMLLMLGIIINLLL), 150–170 (NPNLLMAMAIMSVLVGGWGGL), 178–198 (ILAYSSIAHMGWMIAVTTYNP), 200–220 (LMLLNLTIYITMTLGTFMLFM), 237–257 (LPLIASLILMTMLSLGGLPPL), 274–294 (DMAIMATFMAMTALLNLYFYM), and 327–347 (PPLIMISTMLLPLTPMVLTLF).

This sequence belongs to the complex I subunit 2 family. Core subunit of respiratory chain NADH dehydrogenase (Complex I) which is composed of 45 different subunits. Interacts with TMEM242.

The protein localises to the mitochondrion inner membrane. It catalyses the reaction a ubiquinone + NADH + 5 H(+)(in) = a ubiquinol + NAD(+) + 4 H(+)(out). Functionally, core subunit of the mitochondrial membrane respiratory chain NADH dehydrogenase (Complex I) which catalyzes electron transfer from NADH through the respiratory chain, using ubiquinone as an electron acceptor. Essential for the catalytic activity and assembly of complex I. This chain is NADH-ubiquinone oxidoreductase chain 2, found in Martes zibellina (Sable).